We begin with the raw amino-acid sequence, 63 residues long: ATP synthase membrane subunit K, mitochondrial (63 aa).

A helical membrane pass occupies residues threonine 15–valine 37.

F-type ATPases have 2 components, CF(1) - the catalytic core - and CF(0) - the membrane proton channel. CF(1) has five subunits: alpha(3), beta(3), gamma(1), delta(1), epsilon(1). CF(0) has three main subunits: a, b and c. The ATP synthase complex/complex V exists as a monomeric and a dimeric supercomplex that helps shape mitochondrial cristae to optimize proton flow.

It is found in the mitochondrion membrane. Its function is as follows. Mitochondrial membrane ATP synthase (F(1)F(0) ATP synthase or Complex V) produces ATP from ADP in the presence of a proton gradient across the membrane which is generated by electron transport complexes of the respiratory chain. F-type ATPases consist of two structural domains, F(1) - containing the extramembraneous catalytic core and F(0) - containing the membrane proton channel, linked together by a central stalk and a peripheral stalk. During catalysis, ATP synthesis in the catalytic domain of F(1) is coupled via a rotary mechanism of the central stalk subunits to proton translocation. ATP5MK is a minor subunit of the mitochondrial membrane ATP synthase required for dimerization of the ATP synthase complex and as such regulates ATP synthesis in the mitochondria. The polypeptide is ATP synthase membrane subunit K, mitochondrial (Drosophila melanogaster (Fruit fly)).